A 974-amino-acid chain; its full sequence is RING finger protein nhl-1 (974 aa).

The tract at residues Met-1 to Asp-29 is disordered. A compositionally biased stretch (basic and acidic residues) spans Ala-9–Met-19. The segment at Cys-43–Arg-84 adopts an RING-type zinc-finger fold. Disordered regions lie at residues Val-360–Arg-395 and Ser-416–Val-548. The segment covering Ser-416–Ser-431 has biased composition (polar residues). The segment covering Arg-437–Lys-446 has biased composition (basic and acidic residues). Residues Ser-447–Pro-465 show a composition bias toward polar residues. The span at Ala-488–Pro-501 shows a compositional bias: pro residues. Over residues Leu-511–Ala-528 the composition is skewed to basic and acidic residues. Positions Ser-529 to Ser-538 are enriched in low complexity. NHL repeat units follow at residues Arg-699–Asp-742, Val-746–Glu-788, Leu-792–Asn-835, Ile-839–His-883, Leu-887–Gln-930, and Val-934–Phe-974.

As to quaternary structure, interacts with ubc-13.

This is RING finger protein nhl-1 from Caenorhabditis elegans.